A 399-amino-acid polypeptide reads, in one-letter code: Subtilisin-like protease 4 (399 aa).

The N-terminal stretch at 1-19 is a signal peptide; sequence MVCLKTLSVFLAAFAAADA. Positions 20–118 are excised as a propeptide; sequence RAVFKTQGHK…VEQDQVVRIS (99 aa). Positions 38-117 constitute an Inhibitor I9 domain; it reads YIVVMKDGVS…YVEQDQVVRI (80 aa). N-linked (GlcNAc...) asparagine glycosylation is present at N102. The Peptidase S8 domain occupies 128 to 399; sequence SWGLGRVSHR…NRLLYNGSGQ (272 aa). Catalysis depends on charge relay system residues D160 and H191. Residues N252 and N308 are each glycosylated (N-linked (GlcNAc...) asparagine). The active-site Charge relay system is the S346. The N-linked (GlcNAc...) asparagine glycan is linked to N395.

Belongs to the peptidase S8 family.

Its subcellular location is the secreted. Secreted subtilisin-like serine protease with keratinolytic activity that contributes to pathogenicity. The chain is Subtilisin-like protease 4 (SUB4) from Trichophyton rubrum (Athlete's foot fungus).